A 349-amino-acid polypeptide reads, in one-letter code: RING-H2 finger protein ATL48 (349 aa).

The 85-residue stretch at 1-85 (MSSVEPDMED…DNPWKKLLLS (85 aa)) folds into the HIG1 domain. The residue at position 2 (serine 2) is an N-acetylserine. A run of 3 helical transmembrane segments spans residues 21–41 (PLVP…LISF), 55–75 (ARVV…YYYG), and 121–141 (CLVI…YLIF). The RING-type; atypical zinc-finger motif lies at 207 to 249 (CAVCLNEFSDTDKLRLLPVCSHAFHLHCIDTWLLSNSTCPLCR).

Belongs to the RING-type zinc finger family. ATL subfamily.

The protein localises to the membrane. The enzyme catalyses S-ubiquitinyl-[E2 ubiquitin-conjugating enzyme]-L-cysteine + [acceptor protein]-L-lysine = [E2 ubiquitin-conjugating enzyme]-L-cysteine + N(6)-ubiquitinyl-[acceptor protein]-L-lysine.. It participates in protein modification; protein ubiquitination. This Arabidopsis thaliana (Mouse-ear cress) protein is RING-H2 finger protein ATL48 (ATL48).